The following is a 67-amino-acid chain: Large ribosomal subunit protein bL35 (67 aa).

This sequence belongs to the bacterial ribosomal protein bL35 family.

The polypeptide is Large ribosomal subunit protein bL35 (Allorhizobium ampelinum (strain ATCC BAA-846 / DSM 112012 / S4) (Agrobacterium vitis (strain S4))).